A 93-amino-acid chain; its full sequence is DNA-binding protein HB1 (93 aa).

It belongs to the bacterial histone-like protein family. As to quaternary structure, homodimer.

Its function is as follows. Histone-like DNA-binding protein which is capable of wrapping DNA to stabilize it, and thus to prevent its denaturation under extreme environmental conditions. This is DNA-binding protein HB1 (hup) from Bifidobacterium longum (strain NCC 2705).